The primary structure comprises 536 residues: Casein kinase I homolog RAG8 (536 aa).

Over residues 26–42 (HSTQVLHGSGQHGMQPS) the composition is skewed to polar residues. The segment at 26 to 68 (HSTQVLHGSGQHGMQPSGNNVLNGLANGATGLQSSASSTSTRD) is disordered. Positions 43–65 (GNNVLNGLANGATGLQSSASSTS) are enriched in low complexity. Residues 77-361 (YKIGKKIGEG…QKLDGEYDWM (285 aa)) enclose the Protein kinase domain. ATP-binding positions include 83-91 (IGEGSFGVL) and Lys-106. The active-site Proton acceptor is Asp-196. Polar residues-rich tracts occupy residues 407 to 420 (NNLN…QSHS) and 427 to 436 (DLTQGVSNAP). Residues 407 to 524 (NNLNGSNVPL…NGKVQVADSN (118 aa)) form a disordered region. Low complexity-rich tracts occupy residues 437 to 453 (QQPQ…QHTQ) and 463 to 514 (AYKQ…NQPQ). 2 S-palmitoyl cysteine lipidation sites follow: Cys-535 and Cys-536.

Belongs to the protein kinase superfamily. CK1 Ser/Thr protein kinase family. Casein kinase I subfamily.

It carries out the reaction L-seryl-[protein] + ATP = O-phospho-L-seryl-[protein] + ADP + H(+). The catalysed reaction is L-threonyl-[protein] + ATP = O-phospho-L-threonyl-[protein] + ADP + H(+). Its function is as follows. Casein kinases are operationally defined by their preferential utilization of acidic proteins such as caseins as substrates. The sequence is that of Casein kinase I homolog RAG8 (RAG8) from Kluyveromyces lactis (strain ATCC 8585 / CBS 2359 / DSM 70799 / NBRC 1267 / NRRL Y-1140 / WM37) (Yeast).